Consider the following 500-residue polypeptide: uncharacterized protein (500 aa).

An N-terminal signal peptide occupies residues 1–20 (MHSIIFKAAVALLGVSTAAG). Asn-43 carries N-linked (GlcNAc...) asparagine glycosylation. The FAD-binding PCMH-type domain occupies 60–232 (TALRPDCIIA…TAFTVKTHTQ (173 aa)). His-98 is modified (pros-8alpha-FAD histidine). Residues Asn-194, Asn-201, Asn-246, Asn-299, and Asn-414 are each glycosylated (N-linked (GlcNAc...) asparagine).

It belongs to the oxygen-dependent FAD-linked oxidoreductase family. The cofactor is FAD.

Its subcellular location is the secreted. This is an uncharacterized protein from Arthroderma benhamiae (strain ATCC MYA-4681 / CBS 112371) (Trichophyton mentagrophytes).